The following is a 149-amino-acid chain: UPF0178 protein CPF_2548 (149 aa).

The protein belongs to the UPF0178 family.

The chain is UPF0178 protein CPF_2548 from Clostridium perfringens (strain ATCC 13124 / DSM 756 / JCM 1290 / NCIMB 6125 / NCTC 8237 / Type A).